A 208-amino-acid chain; its full sequence is FMN-dependent NADH:quinone oxidoreductase 1 (208 aa).

Ser10 provides a ligand contact to FMN.

The protein belongs to the azoreductase type 1 family. Homodimer. The cofactor is FMN.

It carries out the reaction 2 a quinone + NADH + H(+) = 2 a 1,4-benzosemiquinone + NAD(+). The enzyme catalyses N,N-dimethyl-1,4-phenylenediamine + anthranilate + 2 NAD(+) = 2-(4-dimethylaminophenyl)diazenylbenzoate + 2 NADH + 2 H(+). Its function is as follows. Quinone reductase that provides resistance to thiol-specific stress caused by electrophilic quinones. Contributes to resistance to 2-methylhydroquinone (2-MHQ) and catechol. Functionally, also exhibits azoreductase activity. Catalyzes the reductive cleavage of the azo bond in aromatic azo compounds to the corresponding amines. In Bacillus subtilis (strain 168), this protein is FMN-dependent NADH:quinone oxidoreductase 1.